A 366-amino-acid polypeptide reads, in one-letter code: D-alanine--D-alanine ligase (366 aa).

The ATP-grasp domain occupies 140 to 346; the sequence is KALFAQSDLP…YGELLSRLVD (207 aa). Residue 173–228 participates in ATP binding; the sequence is EDRLGYPCFVKPANMGSSVGISKATNRAELVAAFDDAVRYDRKLIVEKGINVREIE. Residues D299, E313, and N315 each coordinate Mg(2+).

This sequence belongs to the D-alanine--D-alanine ligase family. It depends on Mg(2+) as a cofactor. The cofactor is Mn(2+).

It localises to the cytoplasm. It carries out the reaction 2 D-alanine + ATP = D-alanyl-D-alanine + ADP + phosphate + H(+). Its pathway is cell wall biogenesis; peptidoglycan biosynthesis. Functionally, cell wall formation. The sequence is that of D-alanine--D-alanine ligase from Heliobacterium modesticaldum (strain ATCC 51547 / Ice1).